The following is a 364-amino-acid chain: MSRADDPGVAGLQVYIVGGAVRDGLLGLPAGDRDWVVVGATPEDMARRGFIPVGGDFPVFLHPRTKEEYALARTERKSGRGYKGFTFYTGADVTLEQDLQRRDLTVNAIARTPQGELVDPLDGVADVRARVLRHVGEAFAEDPVRILRLGRFAARFGDFSIAPETMQLCRRMVEAGEADALVPERVWKEVSRGLMAQAPSRMLDVLARAGALARVMPELHDDAAVRAEIDRAAAAGLPLAGRYALLCRHTPERDALGRRLRAPVECMDQARLLPLAVDALAASATPAAQLDLIERCDALRKPERFDALLQAAAIVAPVDLSAWRARVQAVRAIDAGAIARQCAGDPARIKPALRQARLQALGGA.

Positions 19 and 22 each coordinate ATP. Glycine 19 and arginine 22 together coordinate CTP. Mg(2+) is bound by residues aspartate 32 and aspartate 34. ATP-binding residues include arginine 102, arginine 148, and arginine 151. 3 residues coordinate CTP: arginine 102, arginine 148, and arginine 151.

The protein belongs to the tRNA nucleotidyltransferase/poly(A) polymerase family. Bacterial CCA-adding enzyme type 2 subfamily. It depends on Mg(2+) as a cofactor.

It carries out the reaction a tRNA precursor + 2 CTP + ATP = a tRNA with a 3' CCA end + 3 diphosphate. It catalyses the reaction a tRNA with a 3' CCA end + 2 CTP + ATP = a tRNA with a 3' CCACCA end + 3 diphosphate. Its function is as follows. Catalyzes the addition and repair of the essential 3'-terminal CCA sequence in tRNAs without using a nucleic acid template. Adds these three nucleotides in the order of C, C, and A to the tRNA nucleotide-73, using CTP and ATP as substrates and producing inorganic pyrophosphate. tRNA 3'-terminal CCA addition is required both for tRNA processing and repair. Also involved in tRNA surveillance by mediating tandem CCA addition to generate a CCACCA at the 3' terminus of unstable tRNAs. While stable tRNAs receive only 3'-terminal CCA, unstable tRNAs are marked with CCACCA and rapidly degraded. The polypeptide is CCA-adding enzyme (Bordetella bronchiseptica (strain ATCC BAA-588 / NCTC 13252 / RB50) (Alcaligenes bronchisepticus)).